A 149-amino-acid polypeptide reads, in one-letter code: Large ribosomal subunit protein uL22c (149 aa).

Belongs to the universal ribosomal protein uL22 family. As to quaternary structure, part of the 50S ribosomal subunit.

It is found in the plastid. The protein localises to the chloroplast. Functionally, this protein binds specifically to 23S rRNA. Its function is as follows. The globular domain of the protein is located near the polypeptide exit tunnel on the outside of the subunit, while an extended beta-hairpin is found that lines the wall of the exit tunnel in the center of the 70S ribosome. This chain is Large ribosomal subunit protein uL22c (rpl22-A), found in Pelargonium hortorum (Common geranium).